The primary structure comprises 373 residues: Histidinol-phosphate aminotransferase (373 aa).

The residue at position 231 (K231) is an N6-(pyridoxal phosphate)lysine.

The protein belongs to the class-II pyridoxal-phosphate-dependent aminotransferase family. Histidinol-phosphate aminotransferase subfamily. The cofactor is pyridoxal 5'-phosphate.

It carries out the reaction L-histidinol phosphate + 2-oxoglutarate = 3-(imidazol-4-yl)-2-oxopropyl phosphate + L-glutamate. It participates in amino-acid biosynthesis; L-histidine biosynthesis; L-histidine from 5-phospho-alpha-D-ribose 1-diphosphate: step 7/9. This is Histidinol-phosphate aminotransferase (hisC) from Methanocaldococcus jannaschii (strain ATCC 43067 / DSM 2661 / JAL-1 / JCM 10045 / NBRC 100440) (Methanococcus jannaschii).